A 359-amino-acid chain; its full sequence is Dihydroorotate dehydrogenase (quinone) (359 aa).

FMN contacts are provided by residues 68-72 and Thr92; that span reads AGFDK. Position 72 (Lys72) interacts with substrate. Substrate is bound at residue 117–121; it reads NRMGF. FMN contacts are provided by Asn145 and Asn176. Asn176 contacts substrate. The active-site Nucleophile is Ser179. A substrate-binding site is contributed by Asn181. Residues Lys212 and Thr240 each coordinate FMN. Substrate is bound at residue 241-242; it reads NT. Residues Gly266, Gly295, and 316 to 317 each bind FMN; that span reads YT.

It belongs to the dihydroorotate dehydrogenase family. Type 2 subfamily. In terms of assembly, monomer. It depends on FMN as a cofactor.

It localises to the cell membrane. It carries out the reaction (S)-dihydroorotate + a quinone = orotate + a quinol. The protein operates within pyrimidine metabolism; UMP biosynthesis via de novo pathway; orotate from (S)-dihydroorotate (quinone route): step 1/1. Functionally, catalyzes the conversion of dihydroorotate to orotate with quinone as electron acceptor. The polypeptide is Dihydroorotate dehydrogenase (quinone) (Corynebacterium striatum).